The primary structure comprises 144 residues: Large ribosomal subunit protein uL15 (144 aa).

The segment at 1 to 56 (MELNNLKPAAGAKHAKRRVGRGIGSGLGKTAGRGHKGQKSRSGGFHKVGFEGGQMP) is disordered. The segment covering 21–31 (RGIGSGLGKTA) has biased composition (gly residues).

It belongs to the universal ribosomal protein uL15 family. As to quaternary structure, part of the 50S ribosomal subunit.

In terms of biological role, binds to the 23S rRNA. The protein is Large ribosomal subunit protein uL15 of Burkholderia cenocepacia (strain HI2424).